The sequence spans 270 residues: tRNA pseudouridine synthase A (270 aa).

Catalysis depends on D54, which acts as the Nucleophile. Y112 is a substrate binding site.

Belongs to the tRNA pseudouridine synthase TruA family. Homodimer.

The enzyme catalyses uridine(38/39/40) in tRNA = pseudouridine(38/39/40) in tRNA. Its function is as follows. Formation of pseudouridine at positions 38, 39 and 40 in the anticodon stem and loop of transfer RNAs. The sequence is that of tRNA pseudouridine synthase A from Bordetella bronchiseptica (strain ATCC BAA-588 / NCTC 13252 / RB50) (Alcaligenes bronchisepticus).